Reading from the N-terminus, the 333-residue chain is Nucleoid-associated protein YE1421 (333 aa).

The protein belongs to the YejK family.

The protein localises to the cytoplasm. The protein resides in the nucleoid. In Yersinia enterocolitica serotype O:8 / biotype 1B (strain NCTC 13174 / 8081), this protein is Nucleoid-associated protein YE1421.